The following is a 163-amino-acid chain: Large ribosomal subunit protein uL15 (163 aa).

The segment covering 27-37 (SGLGKTAGRGQ) has biased composition (gly residues). The disordered stretch occupies residues 27–46 (SGLGKTAGRGQKGQKSRSGV).

This sequence belongs to the universal ribosomal protein uL15 family. Part of the 50S ribosomal subunit.

Its function is as follows. Binds to the 23S rRNA. This Zymomonas mobilis subsp. mobilis (strain ATCC 31821 / ZM4 / CP4) protein is Large ribosomal subunit protein uL15.